A 155-amino-acid polypeptide reads, in one-letter code: D-aminoacyl-tRNA deacylase (155 aa).

Residues 137–138 (GP) carry the Gly-cisPro motif, important for rejection of L-amino acids motif.

Belongs to the DTD family. As to quaternary structure, homodimer.

It is found in the cytoplasm. It catalyses the reaction glycyl-tRNA(Ala) + H2O = tRNA(Ala) + glycine + H(+). The catalysed reaction is a D-aminoacyl-tRNA + H2O = a tRNA + a D-alpha-amino acid + H(+). Its function is as follows. An aminoacyl-tRNA editing enzyme that deacylates mischarged D-aminoacyl-tRNAs. Also deacylates mischarged glycyl-tRNA(Ala), protecting cells against glycine mischarging by AlaRS. Acts via tRNA-based rather than protein-based catalysis; rejects L-amino acids rather than detecting D-amino acids in the active site. By recycling D-aminoacyl-tRNA to D-amino acids and free tRNA molecules, this enzyme counteracts the toxicity associated with the formation of D-aminoacyl-tRNA entities in vivo and helps enforce protein L-homochirality. The chain is D-aminoacyl-tRNA deacylase from Roseiflexus sp. (strain RS-1).